The following is a 548-amino-acid chain: Esterase-5A (548 aa).

The first 21 residues, 1-21 (MHLVRWLICLIQLWVQLGAAG), serve as a signal peptide directing secretion. Cysteines 87 and 106 form a disulfide. Asparagine 95 and asparagine 116 each carry an N-linked (GlcNAc...) asparagine glycan. Serine 210 acts as the Acyl-ester intermediate in catalysis. A disulfide bond links cysteine 262 and cysteine 274. Asparagine 479 carries N-linked (GlcNAc...) asparagine glycosylation. A disulfide bridge connects residues cysteine 518 and cysteine 539.

Belongs to the type-B carboxylesterase/lipase family.

It is found in the secreted. The enzyme catalyses a carboxylic ester + H2O = an alcohol + a carboxylate + H(+). This is Esterase-5A (Est-5A) from Drosophila pseudoobscura pseudoobscura (Fruit fly).